Consider the following 375-residue polypeptide: Kininogen (375 aa).

An N-terminal signal peptide occupies residues 1–23 (MKLGVRLCVLVVFSLQLWGPGQG). Cystatin kininogen-type domains lie at 35–139 (CDDK…VEAP) and 156–260 (VESE…GPLD). Residue N74 is glycosylated (N-linked (GlcNAc) asparagine). Intrachain disulfides connect C91–C102, C115–C133, C211–C223, and C234–C254. N-linked (GlcNAc) asparagine glycosylation is present at N235. The tract at residues 283–375 (EVKTTQASTA…LSDLDLLGKK (93 aa)) is disordered.

N-glycosylated, with sialylated biantennary complex-type glycans. In terms of processing, O-glycosylated, sialylated oligosaccharides. Post-translationally, bradykinin is released from kininogen by kallikrein. The N-terminus is blocked. Expressed in the skin, liver, intestine, spleen, pancreas and kidney.

It is found in the cytoplasm. The protein localises to the vacuole. In terms of biological role, inhibits papain and ficin (cysteine proteinases) but not trypsin (a serine proteinase). This chain is Kininogen (LOC106584303), found in Salmo salar (Atlantic salmon).